The sequence spans 793 residues: Protein translocase subunit SecA 2 (793 aa).

ATP-binding positions include Q77, 95–99 (GEGKT), and D493.

The protein belongs to the SecA family. In terms of assembly, monomer and homodimer. Part of the essential Sec protein translocation apparatus which comprises SecA, SecYEG and auxiliary proteins SecDF. Other proteins may also be involved.

Its subcellular location is the cell membrane. It is found in the cytoplasm. It catalyses the reaction ATP + H2O + cellular proteinSide 1 = ADP + phosphate + cellular proteinSide 2.. Part of the Sec protein translocase complex. Interacts with the SecYEG preprotein conducting channel. Has a central role in coupling the hydrolysis of ATP to the transfer of proteins into and across the cell membrane, serving as an ATP-driven molecular motor driving the stepwise translocation of polypeptide chains across the membrane. The polypeptide is Protein translocase subunit SecA 2 (Streptococcus sanguinis (strain SK36)).